A 72-amino-acid chain; its full sequence is Toxin Acra II-3 (72 aa).

The 64-residue stretch at 4–67 folds into the LCN-type CS-alpha/beta domain; sequence PGNYPLDTRG…VWNAAKNYCK (64 aa). 3 disulfide bridges follow: Cys-18-Cys-41, Cys-27-Cys-46, and Cys-31-Cys-48.

Belongs to the long (3 C-C) scorpion toxin superfamily. Sodium channel inhibitor family. Beta subfamily. Expressed by the venom gland.

The protein localises to the secreted. In terms of biological role, binds to sodium channels (Nav) and affects the channel activation process. The chain is Toxin Acra II-3 from Androctonus crassicauda (Arabian fat-tailed scorpion).